The sequence spans 224 residues: UPF0173 metal-dependent hydrolase Memar_1421 (224 aa).

The protein belongs to the UPF0173 family.

The sequence is that of UPF0173 metal-dependent hydrolase Memar_1421 from Methanoculleus marisnigri (strain ATCC 35101 / DSM 1498 / JR1).